The following is a 235-amino-acid chain: tRNA pseudouridine synthase B (235 aa).

The Nucleophile role is filled by Asp-45.

It belongs to the pseudouridine synthase TruB family. Type 1 subfamily.

It carries out the reaction uridine(55) in tRNA = pseudouridine(55) in tRNA. Functionally, responsible for synthesis of pseudouridine from uracil-55 in the psi GC loop of transfer RNAs. This Chlamydia abortus (strain DSM 27085 / S26/3) (Chlamydophila abortus) protein is tRNA pseudouridine synthase B.